The sequence spans 119 residues: Large ribosomal subunit protein bL20 (119 aa).

This sequence belongs to the bacterial ribosomal protein bL20 family.

In terms of biological role, binds directly to 23S ribosomal RNA and is necessary for the in vitro assembly process of the 50S ribosomal subunit. It is not involved in the protein synthesizing functions of that subunit. The chain is Large ribosomal subunit protein bL20 from Levilactobacillus brevis (strain ATCC 367 / BCRC 12310 / CIP 105137 / JCM 1170 / LMG 11437 / NCIMB 947 / NCTC 947) (Lactobacillus brevis).